The sequence spans 194 residues: FMN-dependent NADH:quinone oxidoreductase (194 aa).

Residues Ser-10, 16 to 18 (SQS), 91 to 94 (MYNF), and 135 to 138 (TRGG) each bind FMN.

It belongs to the azoreductase type 1 family. In terms of assembly, homodimer. Requires FMN as cofactor.

It catalyses the reaction 2 a quinone + NADH + H(+) = 2 a 1,4-benzosemiquinone + NAD(+). The catalysed reaction is N,N-dimethyl-1,4-phenylenediamine + anthranilate + 2 NAD(+) = 2-(4-dimethylaminophenyl)diazenylbenzoate + 2 NADH + 2 H(+). Its function is as follows. Quinone reductase that provides resistance to thiol-specific stress caused by electrophilic quinones. In terms of biological role, also exhibits azoreductase activity. Catalyzes the reductive cleavage of the azo bond in aromatic azo compounds to the corresponding amines. The polypeptide is FMN-dependent NADH:quinone oxidoreductase (Vibrio parahaemolyticus serotype O3:K6 (strain RIMD 2210633)).